Consider the following 511-residue polypeptide: Probable pectinesterase/pectinesterase inhibitor 17 (511 aa).

An N-terminal signal peptide occupies residues 1–23 (MMAFRAYIINFVILCILVASTVS). Residues 24-171 (GYNQKDVKAW…SNLLCNTLAI (148 aa)) form a pectinesterase inhibitor 17 region. N-linked (GlcNAc...) asparagine glycans are attached at residues Asn-112 and Asn-160. The interval 237–414 (VKQGVYSENL…LRPVLGSTKT (178 aa)) is pectinesterase 17. Substrate-binding residues include Thr-277 and Gln-307. The Proton donor; for pectinesterase activity role is filled by Asp-330. Cysteines 344 and 364 form a disulfide. The Nucleophile; for pectinesterase activity role is filled by Asp-351. Residues Arg-418 and Trp-420 each contribute to the substrate site.

The protein in the N-terminal section; belongs to the PMEI family. In the C-terminal section; belongs to the pectinesterase family. Expressed in siliques.

It is found in the secreted. Its subcellular location is the cell wall. It catalyses the reaction [(1-&gt;4)-alpha-D-galacturonosyl methyl ester](n) + n H2O = [(1-&gt;4)-alpha-D-galacturonosyl](n) + n methanol + n H(+). It functions in the pathway glycan metabolism; pectin degradation; 2-dehydro-3-deoxy-D-gluconate from pectin: step 1/5. Acts in the modification of cell walls via demethylesterification of cell wall pectin. The protein is Probable pectinesterase/pectinesterase inhibitor 17 (PME17) of Arabidopsis thaliana (Mouse-ear cress).